A 61-amino-acid polypeptide reads, in one-letter code: Small ribosomal subunit protein uS14 (61 aa).

Zn(2+) contacts are provided by Cys24, Cys27, Cys40, and Cys43.

Belongs to the universal ribosomal protein uS14 family. Zinc-binding uS14 subfamily. In terms of assembly, part of the 30S ribosomal subunit. Contacts proteins S3 and S10. Requires Zn(2+) as cofactor.

In terms of biological role, binds 16S rRNA, required for the assembly of 30S particles and may also be responsible for determining the conformation of the 16S rRNA at the A site. This is Small ribosomal subunit protein uS14 from Dictyoglomus thermophilum (strain ATCC 35947 / DSM 3960 / H-6-12).